The chain runs to 195 residues: Peptide deformylase (195 aa).

Residues Cys102 and His144 each contribute to the Fe cation site. Residue Glu145 is part of the active site. Residue His148 coordinates Fe cation.

It belongs to the polypeptide deformylase family. The cofactor is Fe(2+).

The catalysed reaction is N-terminal N-formyl-L-methionyl-[peptide] + H2O = N-terminal L-methionyl-[peptide] + formate. Functionally, removes the formyl group from the N-terminal Met of newly synthesized proteins. Requires at least a dipeptide for an efficient rate of reaction. N-terminal L-methionine is a prerequisite for activity but the enzyme has broad specificity at other positions. This Salinibacter ruber (strain DSM 13855 / M31) protein is Peptide deformylase.